Reading from the N-terminus, the 529-residue chain is RE1-silencing transcription factor B (529 aa).

The C2H2-type 1 zinc-finger motif lies at 156–178 (FRCKPCQYKAESEEEFVHHIKIH). The interval 188-210 (SNKKAQGNEADSSISEESDVSKG) is disordered. 7 C2H2-type zinc fingers span residues 212 to 234 (IQCD…LKHH), 244 to 266 (YKCT…LRNH), 272 to 294 (YTCS…IRTH), 300 to 322 (YQCI…MRTH), 328 to 351 (FKCE…RQVH), 357 to 379 (LTCP…VELH), and 385 to 408 (FLCP…KSRH). A disordered region spans residues 484-529 (LSSTQKKIKTSDARPEKILDKSRKSSCVKRKSDLLENSNDTQTSTV). Residues 492–506 (KTSDARPEKILDKSR) are compositionally biased toward basic and acidic residues. Polar residues predominate over residues 518-529 (LENSNDTQTSTV).

It localises to the nucleus. It is found in the cytoplasm. Functionally, transcriptional repressor which binds neuron-restrictive silencer element (NRSE) and represses neuronal gene transcription in non-neuronal cells. Plays a role in the early development of the nervous system and is required for proper patterning of the neuroectoderm during gastrulation. This involves the correct speciation of the neuroepithelial domain and adequate development of the non-neural ectoderm. This is RE1-silencing transcription factor B (rest-b) from Xenopus laevis (African clawed frog).